A 94-amino-acid polypeptide reads, in one-letter code: Cell division protein FtsB (94 aa).

The Cytoplasmic segment spans residues M1–T3. The helical transmembrane segment at F4–F21 threads the bilayer. Topologically, residues G22–G94 are periplasmic. A coiled-coil region spans residues S33 to A71.

Belongs to the FtsB family. Part of a complex composed of FtsB, FtsL and FtsQ.

It is found in the cell inner membrane. Essential cell division protein. May link together the upstream cell division proteins, which are predominantly cytoplasmic, with the downstream cell division proteins, which are predominantly periplasmic. In Aliivibrio fischeri (strain ATCC 700601 / ES114) (Vibrio fischeri), this protein is Cell division protein FtsB.